A 276-amino-acid chain; its full sequence is Transcriptional antiactivator ExsD (276 aa).

Can form homotrimer. Interacts with ExsA; this interaction inhibits ExsA activity. Interacts with ExsC; this interaction dissociates the ExsD-ExsA complex.

In terms of biological role, negative regulator of the type III secretion system regulon. Acts by disrupting transcriptional activator ExsA self-association and DNA-binding activity in absence of inducing signals. Upon host cell contact, this interaction is disrupted by the anti-antiactivator protein ExsC leading to ExsA activation. The protein is Transcriptional antiactivator ExsD (exsD) of Pseudomonas aeruginosa (strain ATCC 15692 / DSM 22644 / CIP 104116 / JCM 14847 / LMG 12228 / 1C / PRS 101 / PAO1).